The primary structure comprises 744 residues: Prestin (744 aa).

Residues 1 to 75 are Cytoplasmic-facing; that stretch reads MDHAEENEIP…PITKWLPAYK (75 aa). Residues 76 to 104 form a helical membrane-spanning segment; that stretch reads FKEYVLGDLVSGISTGVLQLPQGLAFAML. Topologically, residues 105–108 are extracellular; the sequence is AAVP. A helical membrane pass occupies residues 109–126; it reads PVFGLYSSFYPVIMYCFF. Topologically, residues 127–137 are cytoplasmic; sequence GTSRHISIGPF. The helical transmembrane segment at 138–149 threads the bilayer; that stretch reads AVISLMIGGVAV. Residues 150 to 168 are Extracellular-facing; it reads RLVPDDIVIPGGVNATNGT. The Involved in motor function signature appears at 158 to 168; it reads IPGGVNATNGT. Asparagine 163 and asparagine 166 each carry an N-linked (GlcNAc...) asparagine glycan. The helical transmembrane segment at 169-196 threads the bilayer; that stretch reads EARDALRVKVAMSVTLLSGIIQFCLGVC. Over 197-206 the chain is Cytoplasmic; the sequence is RFGFVAIYLT. A helical membrane pass occupies residues 207–230; sequence EPLVRGFTTAAAVHVFTSMLKYLF. Over 231–241 the chain is Extracellular; that stretch reads GVKTKRYSGIF. The segment at residues 242 to 253 is an intramembrane region (helical); the sequence is SVVYSTVAVLQN. Residues 254–258 are Extracellular-facing; the sequence is VKNLN. A helical transmembrane segment spans residues 259–276; sequence VCSLGVGLMVFGLLLGGK. Over 277-291 the chain is Cytoplasmic; sequence EFNERFKEKLPAPIP. A helical transmembrane segment spans residues 292-307; it reads LEFFAVVMGTGISAGF. The Extracellular segment spans residues 308–332; the sequence is NLHESYSVDVVGTLPLGLLPPANPD. Residues 333 to 359 form a helical membrane-spanning segment; it reads TSLFHLVYVDAIAIAIVGFSVTISMAK. The Cytoplasmic segment spans residues 360-370; the sequence is TLANKHGYQVD. Residues 371–388 traverse the membrane as a helical segment; it reads GNQELIALGICNSIGSLF. The Extracellular portion of the chain corresponds to 389–396; it reads QTFSISCS. Residues 397–406 form a helical membrane-spanning segment; it reads LSRSLVQEGT. Serine 398 lines the salicylate pocket. The Cytoplasmic portion of the chain corresponds to 407-410; sequence GGKT. Residues 411 to 431 form a helical membrane-spanning segment; sequence QLAGCLASLMILLVILATGFL. Residues 432–436 lie on the Extracellular side of the membrane; it reads FESLP. A helical transmembrane segment spans residues 437–464; sequence QAVLSAIVIVNLKGMFMQFSDLPFFWRT. Position 465 (serine 465) is a topological domain, cytoplasmic. The helical transmembrane segment at 466 to 481 threads the bilayer; sequence KIELTIWLTTFVSSLF. At 482 to 484 the chain is on the extracellular side; that stretch reads LGL. A helical membrane pass occupies residues 485 to 504; sequence DYGLITAVIIALLTVIYRTQ. The interval 505 to 718 is extended region for STAS domain; sequence SPSYTVLGQL…AVLGSQVREA (214 aa). Residues 505-744 are Cytoplasmic-facing; that stretch reads SPSYTVLGQL…PNATPTTPEA (240 aa). One can recognise an STAS domain in the interval 525–713; sequence AYEEVKEIPG…HSIHDAVLGS (189 aa). The segment at 720–744 is disordered; that stretch reads AEQETTVLPPQEDMEPNATPTTPEA.

The protein belongs to the SLC26A/SulP transporter (TC 2.A.53) family. Homodimer. Interacts (via STAS domain) with CALM; this interaction is calcium-dependent and the STAS domain interacts with only one lobe of CALM which is an elongated conformation. Interacts with MYH1. Specifically expressed in outer hair cells of cochleae (at protein level). Not detected in other cells of the organ of Corti.

It is found in the lateral cell membrane. It carries out the reaction 2 hydrogencarbonate(in) + chloride(out) = 2 hydrogencarbonate(out) + chloride(in). With respect to regulation, salicylate, an inhibitor of outer hair cell motility, acts as a competitive antagonist at the prestin anion-binding site. Functionally, voltage-sensitive motor protein that drives outer hair cell (OHC) electromotility (eM) and participates in sound amplification in the hearing organ. Converts changes in the transmembrane electric potential into mechanical displacements resulting in the coupling of its expansion to movement of a charged voltage sensor across the lipid membrane. The nature of the voltage sensor is not completely clear, and two models compete. In the first model, acts as an incomplete transporter where intracellular chloride anion acts as extrinsic voltage sensor that drives conformational change in the protein which is sufficient to produce a length change in the plane of the membrane and hence in the length of the OHC. The second model in which multiple charged amino acid residues are distributed at the intracellular and extracellular membrane interfaces that form an intrinsic voltage sensor, whose movement produces the non-linear capacitance (NLC). However, the effective voltage sensor may be the result of a hybrid voltage sensor assembled from intrinsic charge (charged residues) and extrinsic charge (bound anion). Notably, binding of anions to the anion-binding pocket partially neutralizes the intrinsic positive charge rather than to form an electrically negative sensor, therefore remaining charge may serve as voltage sensor that, after depolarization, moves from down (expanded state) to up (contracted) conformation, which is accompanied by an eccentric contraction of the intermembrane cross-sectional area of the protein as well as a major increase in the hydrophobic thickness of the protein having as consequences the plasma membrane thickening and the cell contraction after membrane depolarization. The anion-binding pocket transits from the inward-open (Down) state, where it is exposed toward the intracellular solvent in the absence of anion, to the occluded (Up) state upon anion binding. Salicylate competes for the anion-binding site and inhibits the voltage-sensor movement, and therefore inhibits the charge transfer and electromotility by displacing Cl(-) from the anion-binding site and by preventing the structural transitions to the contracted state. In addition, can act as a weak Cl(-)/HCO3(-) antiporter across the cell membrane and so regulate the intracellular pH of the outer hair cells (OHCs), while firstly found as being unable to mediate electrogenic anion transport. Moreover, supports a role in cardiac mechanical amplification serving as an elastic element to enhance the actomyosin- based sarcomere contraction system. This Rattus norvegicus (Rat) protein is Prestin.